The primary structure comprises 421 residues: Ameloblastin (421 aa).

The signal sequence occupies residues 1–26 (MPALKIPLFKMKDMVLILCLLKMSSA). The residue at position 37 (Pro37) is a Hydroxyproline. A Phosphoserine modification is found at Ser43. 3 disordered regions span residues 104–126 (PVHP…QKPF), 264–311 (GGMP…ADPE), and 333–421 (GKIP…FQEP). Ser112 carries an O-linked (GalNAc...) serine glycan. Residues 113–125 (QPSLQPQQPGQKP) show a composition bias toward low complexity. Positions 339–350 (ARGPAGRSRGPP) are enriched in low complexity. A compositionally biased stretch (polar residues) spans 388 to 410 (MDSTATPYSEHTSMPGNKAQQPQ). The span at 411 to 421 (IKRDAWRFQEP) shows a compositional bias: basic and acidic residues.

The protein belongs to the ameloblastin family. In terms of tissue distribution, ameloblast-specific. Located at the Tomes processes of secretory ameloblasts and in the sheath space between rod-interrod enamel.

The protein localises to the secreted. It is found in the extracellular space. It localises to the extracellular matrix. Its function is as follows. Involved in the mineralization and structural organization of enamel. This is Ameloblastin (AMBN) from Sus scrofa (Pig).